A 226-amino-acid polypeptide reads, in one-letter code: Phosphoglycolate phosphatase (226 aa).

D8 (nucleophile) is an active-site residue. Mg(2+)-binding residues include D8 and D10. Residue K152 participates in substrate binding. Mg(2+) contacts are provided by D175 and D179.

This sequence belongs to the archaeal SPP-like hydrolase family. Requires Mg(2+) as cofactor.

It carries out the reaction 2-phosphoglycolate + H2O = glycolate + phosphate. In terms of biological role, catalyzes the dephosphorylation of 2-phosphoglycolate. This is Phosphoglycolate phosphatase from Natronomonas pharaonis (strain ATCC 35678 / DSM 2160 / CIP 103997 / JCM 8858 / NBRC 14720 / NCIMB 2260 / Gabara) (Halobacterium pharaonis).